Reading from the N-terminus, the 444-residue chain is Acetyl-CoA--deacetylcephalosporin C acetyltransferase (444 aa).

The propeptide occupies Met-1–Ser-71. The 314-residue stretch at Val-112–Val-425 folds into the AB hydrolase-1 domain. Catalysis depends on residues Ser-208 and His-421.

The protein belongs to the AB hydrolase superfamily. MetX family. Heterodimer of chain I and chain II.

The enzyme catalyses deacetylcephalosporin C + acetyl-CoA = cephalosporin C + CoA. The protein operates within antibiotic biosynthesis; cephalosporin C biosynthesis. Catalyzes the conversion of deacetylcephalosporin C to cephalosporin C. In Hapsidospora chrysogena (Acremonium chrysogenum), this protein is Acetyl-CoA--deacetylcephalosporin C acetyltransferase (CEFG).